The sequence spans 115 residues: Con-Ins T1A (115 aa).

An N-terminal signal peptide occupies residues 1–24 (MTTSFYFLLMALGLLLYVCQSSFG). Residues 25–29 (NQHTR) constitute a propeptide that is removed on maturation. Residue proline 34 is modified to 4-hydroxyproline; partial. 3 cysteine pairs are disulfide-bonded: cysteine 38–cysteine 101, cysteine 50–cysteine 114, and cysteine 100–cysteine 105. Glutamate 41 is subject to 4-carboxyglutamate. The propeptide at 53–94 (KRNDAGKKRGRASPLWQRGGSLSMLKARAKRNEAFHLQRAHR) is c peptide. A 4-carboxyglutamate modification is found at glutamate 98. Proline 104 carries the post-translational modification 4-hydroxyproline; partial. Glutamate 109 carries the post-translational modification 4-carboxyglutamate; partial. Cysteine 114 is subject to Cysteine amide.

Belongs to the insulin family. As to quaternary structure, heterodimer of A and B chains; disulfide-linked. As to expression, expressed by the venom gland.

Its subcellular location is the secreted. Its function is as follows. This venom insulin, from a fish-hunting cone snail, facilitates prey capture by rapidly inducing hypoglycemic shock. It is one of the smallest known insulin found in nature and lacks the C-terminal segment of the B chain that, in human insulin, mediates engagement of the insulin receptor (INSR) and assembly of the hormone's hexameric storage form. Despite lacking this segment, it both binds and activates human insulin receptor (long isoform (HIR-B)) with a high potency (EC(50)=12.0 nM). In vivo, intraperitoneal injection of this peptide into zebrafish lowers blood glucose with a lower potency than human insulin. In addition, when applied to water, this peptide reduces overall locomotor activity of zebrafish larvae, observed as a significant decrease in the percentage of time spent swimming and movement frequency. When tested on a mouse model of diabetes, this insulin also lowers blood glucose with a 10-fold lower potency than human insulin. This chain is Con-Ins T1A, found in Conus tulipa (Fish-hunting cone snail).